A 230-amino-acid chain; its full sequence is Transcriptional regulatory protein CitT (230 aa).

A Response regulatory domain is found at 6 to 124; sequence KVLIIEDDFR…VLHQRLDAYV (119 aa). Asp59 is modified (4-aspartylphosphate). A DNA-binding region (H-T-H motif) is located at residues 184 to 203; sequence AMEGARLIGASRSTVRRYFE.

Post-translationally, phosphorylated by CitS.

It is found in the cytoplasm. In terms of biological role, member of the two-component regulatory system CitT/CitS. The polypeptide is Transcriptional regulatory protein CitT (citT) (Halalkalibacterium halodurans (strain ATCC BAA-125 / DSM 18197 / FERM 7344 / JCM 9153 / C-125) (Bacillus halodurans)).